A 221-amino-acid chain; its full sequence is Urease accessory protein UreG (221 aa).

19–26 contributes to the GTP binding site; it reads GPVGSGKT.

It belongs to the SIMIBI class G3E GTPase family. UreG subfamily. Homodimer. UreD, UreF and UreG form a complex that acts as a GTP-hydrolysis-dependent molecular chaperone, activating the urease apoprotein by helping to assemble the nickel containing metallocenter of UreC. The UreE protein probably delivers the nickel.

It is found in the cytoplasm. Functionally, facilitates the functional incorporation of the urease nickel metallocenter. This process requires GTP hydrolysis, probably effectuated by UreG. This Yersinia enterocolitica serotype O:8 / biotype 1B (strain NCTC 13174 / 8081) protein is Urease accessory protein UreG.